The primary structure comprises 241 residues: DNA protection during starvation protein 2 (241 aa).

The disordered stretch occupies residues 25–65; sequence GAQSAGNGVPSTNVNTPAPNTGQSTAQNTNTASPLPYNRAT. The segment covering 33 to 57 has biased composition (polar residues); the sequence is VPSTNVNTPAPNTGQSTAQNTNTAS. Fe cation is bound by residues His-100, Asp-127, and Glu-131. Residues 220–229 show a composition bias toward polar residues; sequence TPTDPNTGFD. The segment at 220 to 241 is disordered; it reads TPTDPNTGFDINNGKPVPLRGR.

The protein belongs to the Dps family. Homododecamer. The 12 subunits form a hollow sphere into which the mineral iron core of up to 500 Fe(3+) can be deposited.

It is found in the cytoplasm. It catalyses the reaction 2 Fe(2+) + H2O2 + 2 H(+) = 2 Fe(3+) + 2 H2O. In terms of biological role, protects DNA from oxidative damage by sequestering intracellular Fe(2+) ion and storing it in the form of Fe(3+) oxyhydroxide mineral. One hydrogen peroxide oxidizes two Fe(2+) ions, which prevents hydroxyl radical production by the Fenton reaction. This is DNA protection during starvation protein 2 (dps2) from Deinococcus radiodurans (strain ATCC 13939 / DSM 20539 / JCM 16871 / CCUG 27074 / LMG 4051 / NBRC 15346 / NCIMB 9279 / VKM B-1422 / R1).